Here is a 391-residue protein sequence, read N- to C-terminus: S-adenosylmethionine synthase (391 aa).

Histidine 14 is an ATP binding site. Position 16 (aspartate 16) interacts with Mg(2+). Position 42 (glutamate 42) interacts with K(+). The L-methionine site is built by glutamate 55 and glutamine 98. Residues glutamine 98–glutamate 108 are flexible loop. ATP is bound by residues aspartate 172–lysine 174, arginine 238–phenylalanine 239, aspartate 247, arginine 253–lysine 254, alanine 270, and lysine 274. L-methionine is bound at residue aspartate 247. Lysine 278 is a binding site for L-methionine.

It belongs to the AdoMet synthase family. Homotetramer; dimer of dimers. The cofactor is Mg(2+). Requires K(+) as cofactor.

It is found in the cytoplasm. It catalyses the reaction L-methionine + ATP + H2O = S-adenosyl-L-methionine + phosphate + diphosphate. It participates in amino-acid biosynthesis; S-adenosyl-L-methionine biosynthesis; S-adenosyl-L-methionine from L-methionine: step 1/1. In terms of biological role, catalyzes the formation of S-adenosylmethionine (AdoMet) from methionine and ATP. The overall synthetic reaction is composed of two sequential steps, AdoMet formation and the subsequent tripolyphosphate hydrolysis which occurs prior to release of AdoMet from the enzyme. The protein is S-adenosylmethionine synthase of Clostridium botulinum (strain Okra / Type B1).